The following is a 219-amino-acid chain: Cytidylate kinase (219 aa).

15–23 (GPAASGKGT) lines the ATP pocket.

This sequence belongs to the cytidylate kinase family. Type 1 subfamily.

The protein localises to the cytoplasm. It catalyses the reaction CMP + ATP = CDP + ADP. It carries out the reaction dCMP + ATP = dCDP + ADP. The chain is Cytidylate kinase from Brucella abortus (strain S19).